A 420-amino-acid polypeptide reads, in one-letter code: Protein BDLF2 (420 aa).

Disordered regions lie at residues 1–21 and 64–129; these read MVDEQVAVEHGTVSHTISREE and AAAV…GGQR. At 1 to 184 the chain is on the intravirion side; sequence MVDEQVAVEH…AETLAEPPRC (184 aa). The segment covering 92–108 has biased composition (low complexity); it reads TNTQDQNQNQTTRARTN. Residues 185-205 form a helical; Signal-anchor for type II membrane protein membrane-spanning segment; the sequence is FMLSFVFIYYCCYLAFLALLA. The Virion surface segment spans residues 206-420; it reads FGFNPLFLPS…LEEVMYVMVQ (215 aa). N-linked (GlcNAc...) asparagine; by host glycosylation is found at asparagine 258, asparagine 264, asparagine 300, asparagine 304, asparagine 371, and asparagine 384.

Belongs to the herpesviridae BDLF2 family. Interacts with BMRF2.

It is found in the virion membrane. Rearranges cellular actin to increase intercellular contacts and thereby promote virus cell-to-cell spreading. Induce the outgrowth of long, branched plasma membrane fronds to create intercellular network for virion traffic. The fronds are actin based and RhoA-dependent. This chain is Protein BDLF2, found in Epstein-Barr virus (strain GD1) (HHV-4).